The following is a 753-amino-acid chain: Polyribonucleotide nucleotidyltransferase (753 aa).

The Mg(2+) site is built by Asp543 and Asp549. The region spanning 609–668 (PRITTVKIPVAKIGELIGPKGKNINALTEETGANISIEDDGTVFISAADGASAEAAIEKI) is the KH domain. Residues 680 to 749 (GERFLGTVVK…NRGKISLVPV (70 aa)) form the S1 motif domain.

The protein belongs to the polyribonucleotide nucleotidyltransferase family. Requires Mg(2+) as cofactor.

It localises to the cytoplasm. It catalyses the reaction RNA(n+1) + phosphate = RNA(n) + a ribonucleoside 5'-diphosphate. In terms of biological role, involved in mRNA degradation. Catalyzes the phosphorolysis of single-stranded polyribonucleotides processively in the 3'- to 5'-direction. This is Polyribonucleotide nucleotidyltransferase from Corynebacterium glutamicum (strain ATCC 13032 / DSM 20300 / JCM 1318 / BCRC 11384 / CCUG 27702 / LMG 3730 / NBRC 12168 / NCIMB 10025 / NRRL B-2784 / 534).